Here is a 129-residue protein sequence, read N- to C-terminus: Small ribosomal subunit protein uS11 (129 aa).

The protein belongs to the universal ribosomal protein uS11 family. As to quaternary structure, part of the 30S ribosomal subunit. Interacts with proteins S7 and S18. Binds to IF-3.

Its function is as follows. Located on the platform of the 30S subunit, it bridges several disparate RNA helices of the 16S rRNA. Forms part of the Shine-Dalgarno cleft in the 70S ribosome. This is Small ribosomal subunit protein uS11 from Caulobacter sp. (strain K31).